We begin with the raw amino-acid sequence, 460 residues long: Retinoic acid receptor alpha (460 aa).

The tract at residues 1–87 (MASNSSSCPT…PPPLPRIYKP (87 aa)) is modulating. The segment at 46–78 (HQLPVSGYSTPSPATVETQSTSSEEIVPSPPSP) is disordered. Polar residues predominate over residues 52–69 (GYSTPSPATVETQSTSSE). NR C4-type zinc fingers lie at residues 88–108 (CFVCQDKSSGYHYGVSACEGC) and 124–148 (CHRDKNCIINKVTRNRCQYCRLQKC). Residues 88–153 (CFVCQDKSSG…RLQKCFEVGM (66 aa)) constitute a DNA-binding region (nuclear receptor). Residues 154–182 (SKESVRNDRNKKKKDVPKTECSESYIVTP) form a hinge region. The region spanning 183–417 (EVEELIEKVR…PLIQEMLENS (235 aa)) is the NR LBD domain. The 9aaTAD motif lies at 408-416 (PLIQEMLEN). Positions 418 to 460 (EGMDTLGGQPGGPRTGGLGPPPGSCSPSLSPSSTRSSPATHSP) are disordered. The span at 425-435 (GQPGGPRTGGL) shows a compositional bias: gly residues. The span at 442 to 460 (CSPSLSPSSTRSSPATHSP) shows a compositional bias: low complexity.

The protein belongs to the nuclear hormone receptor family. NR1 subfamily. Heterodimer; with an RXR molecule. Binds DNA preferentially as a RAR/RXR heterodimer. In terms of tissue distribution, ubiquitous.

The protein localises to the nucleus. Functionally, receptor for retinoic acid. Retinoic acid receptors bind as heterodimers to their target response elements in response to their ligands, all-trans or 9-cis retinoic acid, and regulate gene expression in various biological processes. The RAR/RXR heterodimers bind to the retinoic acid response elements (RARE) composed of tandem 5'-AGGTCA-3' sites known as DR1-DR5. Required for hindbrain patterning and appears to be required for skin development. The sequence is that of Retinoic acid receptor alpha (RARA) from Gallus gallus (Chicken).